We begin with the raw amino-acid sequence, 461 residues long: Putative aldehyde dehydrogenase FUS7 (461 aa).

Residue 220–225 (GSTATG) coordinates NAD(+). Catalysis depends on residues Glu-242 and Cys-276.

Belongs to the aldehyde dehydrogenase family.

The enzyme catalyses an aldehyde + NAD(+) + H2O = a carboxylate + NADH + 2 H(+). Its function is as follows. Putative aldehyde dehydrogenase; part of the gene cluster that mediates the biosynthesis of the mycotoxin fusarin C. Within the cluster, FUS1, FUS2, FUS8 and FUS9 are sufficient for fusarin production. The other FUS cluster members are not essential for fusarin C biosynthesis. The polypeptide is Putative aldehyde dehydrogenase FUS7 (Gibberella moniliformis (strain M3125 / FGSC 7600) (Maize ear and stalk rot fungus)).